We begin with the raw amino-acid sequence, 208 residues long: Small ribosomal subunit protein bS6 (208 aa).

Disordered regions lie at residues 121–143 (SENN…KPRL) and 185–208 (NQQT…GAKP). Low complexity predominate over residues 185-195 (NQQTSQANNNQ).

This sequence belongs to the bacterial ribosomal protein bS6 family.

Binds together with bS18 to 16S ribosomal RNA. In Mycoplasma genitalium (strain ATCC 33530 / DSM 19775 / NCTC 10195 / G37) (Mycoplasmoides genitalium), this protein is Small ribosomal subunit protein bS6 (rpsF).